The chain runs to 375 residues: Chaperone protein DnaJ (375 aa).

The J domain maps to 5-70 (DYYEVLGVSR…QKRAAYDQFG (66 aa)). A CR-type zinc finger spans residues 131-209 (GTTVKIRVPS…CHGSGYVEEQ (79 aa)). Cys144, Cys147, Cys161, Cys164, Cys183, Cys186, Cys197, and Cys200 together coordinate Zn(2+). CXXCXGXG motif repeat units follow at residues 144-151 (CKSCSGSG), 161-168 (CGTCNGAG), 183-190 (CPRCRGAG), and 197-204 (CRSCHGSG).

It belongs to the DnaJ family. In terms of assembly, homodimer. The cofactor is Zn(2+).

It localises to the cytoplasm. Participates actively in the response to hyperosmotic and heat shock by preventing the aggregation of stress-denatured proteins and by disaggregating proteins, also in an autonomous, DnaK-independent fashion. Unfolded proteins bind initially to DnaJ; upon interaction with the DnaJ-bound protein, DnaK hydrolyzes its bound ATP, resulting in the formation of a stable complex. GrpE releases ADP from DnaK; ATP binding to DnaK triggers the release of the substrate protein, thus completing the reaction cycle. Several rounds of ATP-dependent interactions between DnaJ, DnaK and GrpE are required for fully efficient folding. Also involved, together with DnaK and GrpE, in the DNA replication of plasmids through activation of initiation proteins. The sequence is that of Chaperone protein DnaJ from Hahella chejuensis (strain KCTC 2396).